The chain runs to 348 residues: Histidinol-phosphate aminotransferase (348 aa).

Residues 1-31 are disordered; the sequence is MLPTRDCVRQTPAYTPGEQPQTAGFTKLNTN. Residues 18–31 are compositionally biased toward polar residues; that stretch reads EQPQTAGFTKLNTN. The residue at position 207 (Lys207) is an N6-(pyridoxal phosphate)lysine.

This sequence belongs to the class-II pyridoxal-phosphate-dependent aminotransferase family. Histidinol-phosphate aminotransferase subfamily. Homodimer. It depends on pyridoxal 5'-phosphate as a cofactor.

It carries out the reaction L-histidinol phosphate + 2-oxoglutarate = 3-(imidazol-4-yl)-2-oxopropyl phosphate + L-glutamate. The protein operates within amino-acid biosynthesis; L-histidine biosynthesis; L-histidine from 5-phospho-alpha-D-ribose 1-diphosphate: step 7/9. This chain is Histidinol-phosphate aminotransferase, found in Microcystis aeruginosa (strain NIES-843 / IAM M-2473).